A 522-amino-acid chain; its full sequence is Putative zinc finger protein 286B (522 aa).

The tract at residues 1-30 (METDLAEMPEKGVLSSQDSPHFQEKSTEEG) is disordered. C2H2-type zinc fingers lie at residues 244-266 (HKCN…QRVH), 272-294 (YTCN…QRTH), 299-321 (FECR…QRIH), 327-349 (YECN…QLIH), 355-377 (YECN…QRTH), 383-405 (YKCQ…QRVH), 411-433 (YECS…QRIH), 439-461 (YECS…QRIH), 467-489 (YKCS…QRTH), and 495-517 (FRCN…QRVH).

It belongs to the krueppel C2H2-type zinc-finger protein family.

It localises to the nucleus. Its function is as follows. May be involved in transcriptional regulation. In Homo sapiens (Human), this protein is Putative zinc finger protein 286B (ZNF286B).